The following is a 280-amino-acid chain: Shikimate dehydrogenase (NADP(+)) (280 aa).

Residues 19 to 21 (SFS) and T66 each bind shikimate. K70 functions as the Proton acceptor in the catalytic mechanism. An NADP(+)-binding site is contributed by E82. 2 residues coordinate shikimate: N91 and D106. NADP(+)-binding positions include 130–134 (GSGGA) and L222. Y224 contacts shikimate. NADP(+) is bound at residue G245.

It belongs to the shikimate dehydrogenase family. Homodimer.

It carries out the reaction shikimate + NADP(+) = 3-dehydroshikimate + NADPH + H(+). The protein operates within metabolic intermediate biosynthesis; chorismate biosynthesis; chorismate from D-erythrose 4-phosphate and phosphoenolpyruvate: step 4/7. Its function is as follows. Involved in the biosynthesis of the chorismate, which leads to the biosynthesis of aromatic amino acids. Catalyzes the reversible NADPH linked reduction of 3-dehydroshikimate (DHSA) to yield shikimate (SA). This Methanococcus maripaludis (strain C7 / ATCC BAA-1331) protein is Shikimate dehydrogenase (NADP(+)).